We begin with the raw amino-acid sequence, 543 residues long: Chaperonin GroEL 2 (543 aa).

ATP-binding positions include 29–32 (TLGP), 86–90 (DGTTT), Gly-413, 478–480 (NAA), and Asp-494.

The protein belongs to the chaperonin (HSP60) family. Forms a cylinder of 14 subunits composed of two heptameric rings stacked back-to-back. Interacts with the co-chaperonin GroES.

Its subcellular location is the cytoplasm. It carries out the reaction ATP + H2O + a folded polypeptide = ADP + phosphate + an unfolded polypeptide.. Functionally, together with its co-chaperonin GroES, plays an essential role in assisting protein folding. The GroEL-GroES system forms a nano-cage that allows encapsulation of the non-native substrate proteins and provides a physical environment optimized to promote and accelerate protein folding. In Thermosynechococcus vestitus (strain NIES-2133 / IAM M-273 / BP-1), this protein is Chaperonin GroEL 2.